A 259-amino-acid chain; its full sequence is uncharacterized protein (259 aa).

It belongs to the chlamydial CPn_0128/CT_035/TC_0305 family.

This is an uncharacterized protein from Chlamydia muridarum (strain MoPn / Nigg).